The primary structure comprises 324 residues: Phospho-N-acetylmuramoyl-pentapeptide-transferase (324 aa).

A run of 10 helical transmembrane segments spans residues 5-25 (VILF…PIFI), 55-75 (GGLM…DIFF), 81-101 (TYML…DDFI), 122-142 (LIAL…VVSI), 147-167 (VSLD…VGGS), 176-196 (LDGL…VLAW), 203-223 (VAIF…FNAH), 227-247 (VFMG…IAIL), 250-270 (LEIL…SVII), and 302-322 (VVVT…YIEV).

This sequence belongs to the glycosyltransferase 4 family. MraY subfamily. The cofactor is Mg(2+).

It is found in the cell membrane. It carries out the reaction UDP-N-acetyl-alpha-D-muramoyl-L-alanyl-gamma-D-glutamyl-meso-2,6-diaminopimeloyl-D-alanyl-D-alanine + di-trans,octa-cis-undecaprenyl phosphate = di-trans,octa-cis-undecaprenyl diphospho-N-acetyl-alpha-D-muramoyl-L-alanyl-D-glutamyl-meso-2,6-diaminopimeloyl-D-alanyl-D-alanine + UMP. It functions in the pathway cell wall biogenesis; peptidoglycan biosynthesis. Its function is as follows. Catalyzes the initial step of the lipid cycle reactions in the biosynthesis of the cell wall peptidoglycan: transfers peptidoglycan precursor phospho-MurNAc-pentapeptide from UDP-MurNAc-pentapeptide onto the lipid carrier undecaprenyl phosphate, yielding undecaprenyl-pyrophosphoryl-MurNAc-pentapeptide, known as lipid I. The chain is Phospho-N-acetylmuramoyl-pentapeptide-transferase from Anoxybacillus flavithermus (strain DSM 21510 / WK1).